The primary structure comprises 1022 residues: Protein trachealess (1022 aa).

The bHLH domain maps to Leu-86–Arg-139. Residues Glu-174–Gly-244 form the PAS 1 domain. The interval Leu-239–Ala-289 is disordered. Gly residues predominate over residues Ser-243–Met-265. Positions His-280–Ala-289 are enriched in polar residues. In terms of domain architecture, PAS 2 spans Pro-391 to Gly-461. The PAC domain occupies Thr-465–Arg-508. Disordered stretches follow at residues Asp-525–Ala-686, Ala-849–Val-896, and Asp-962–Ala-996. Composition is skewed to low complexity over residues Arg-578–Ser-587 and Pro-611–Val-625. The Nuclear localization signal signature appears at Lys-629–Ala-636. Ser-673 is subject to Phosphoserine; by PKB/Akt1. Residues Thr-851–Pro-864 are compositionally biased toward polar residues. Low complexity predominate over residues Gly-987–Ala-996.

Efficient DNA binding requires dimerization with another bHLH protein. Heterodimer with tgo. Post-translationally, ser-673 phosphorylation by PKB/Akt1 is required for nuclear targeting and transcriptional activity. As to expression, trachea, salivary gland ducts, posterior spiracles (Filzkoeper primordia) and a subset of cells in the CNS.

It is found in the nucleus. In terms of biological role, transcription factor, master regulator of tracheal cell fates in the embryo, necessary for the development of the salivary gland duct, Malpighian tubules and the posterior spiracles. It may induce a general fate of branched tubular structures of epithelial origin. Functions with tgo to regulate expression of btl. The chain is Protein trachealess (trh) from Drosophila melanogaster (Fruit fly).